A 149-amino-acid polypeptide reads, in one-letter code: Transcriptional regulator MraZ (149 aa).

SpoVT-AbrB domains follow at residues lysine 7 to histidine 54 and alanine 83 to asparagine 126.

The protein belongs to the MraZ family. Forms oligomers.

It is found in the cytoplasm. The protein resides in the nucleoid. The sequence is that of Transcriptional regulator MraZ from Rickettsia akari (strain Hartford).